Reading from the N-terminus, the 277-residue chain is Undecaprenyl-diphosphatase 2 (277 aa).

Helical transmembrane passes span 43–63 (RAMAFNIIIQLGAILAVVWEF), 87–107 (LLIAFFPAVILGVLFADTIHE), 109–129 (LFNPITVAVALVVGGIVMLWA), 183–203 (AATEFSFFLAMPTMVGAAVYS), 214–234 (SDLPVFALGFVVAFIFAMIAV), and 254–274 (IAFGLLILATWQFGWVNWTAA).

The protein belongs to the UppP family.

Its subcellular location is the cell inner membrane. The catalysed reaction is di-trans,octa-cis-undecaprenyl diphosphate + H2O = di-trans,octa-cis-undecaprenyl phosphate + phosphate + H(+). In terms of biological role, catalyzes the dephosphorylation of undecaprenyl diphosphate (UPP). Confers resistance to bacitracin. The chain is Undecaprenyl-diphosphatase 2 from Pseudomonas fluorescens (strain Pf0-1).